The sequence spans 328 residues: Leucine carboxyl methyltransferase 1 (328 aa).

Residues Arg81, Gly105, Asp128, 175 to 177 (DLN), and Glu201 contribute to the S-adenosyl-L-methionine site.

Belongs to the methyltransferase superfamily. LCMT family.

The enzyme catalyses [phosphatase 2A protein]-C-terminal L-leucine + S-adenosyl-L-methionine = [phosphatase 2A protein]-C-terminal L-leucine methyl ester + S-adenosyl-L-homocysteine. Inhibited by S-adenosyl-L-homocysteine. Its function is as follows. Methylates the carboxyl group of the C-terminal leucine residue of protein phosphatase 2A catalytic subunits to form alpha-leucine ester residues. Acts on the two major protein phosphatase 2A catalytic subunits, PPH21 and PPH22. The polypeptide is Leucine carboxyl methyltransferase 1 (PPM1) (Saccharomyces cerevisiae (strain ATCC 204508 / S288c) (Baker's yeast)).